The following is a 126-amino-acid chain: Membrane-anchored ubiquitin-fold protein 2 (126 aa).

A Ubiquitin-like domain is found at 14-79 (VEVRFRLDDG…VLENNRTLAE (66 aa)). Residue Cys123 is modified to Cysteine methyl ester. A lipid anchor (S-geranylgeranyl cysteine) is attached at Cys123. The propeptide at 124–126 (TIL) is removed in mature form.

It localises to the cell membrane. May serve as docking site to facilitate the association of other proteins to the plasma membrane. In Oryza sativa subsp. japonica (Rice), this protein is Membrane-anchored ubiquitin-fold protein 2 (MUB2).